The sequence spans 260 residues: Flap endonuclease Xni (260 aa).

Residue aspartate 109 participates in Mg(2+) binding. Positions valine 165 to alanine 259 constitute a 5'-3' exonuclease domain. K(+) is bound by residues leucine 176, proline 185, valine 187, and valine 190. Residues glycine 189–alanine 194 form an interaction with DNA region.

Belongs to the Xni family. Requires Mg(2+) as cofactor. K(+) serves as cofactor.

Has flap endonuclease activity. During DNA replication, flap endonucleases cleave the 5'-overhanging flap structure that is generated by displacement synthesis when DNA polymerase encounters the 5'-end of a downstream Okazaki fragment. This Vibrio campbellii (strain ATCC BAA-1116) protein is Flap endonuclease Xni.